Here is a 159-residue protein sequence, read N- to C-terminus: SsrA-binding protein (159 aa).

It belongs to the SmpB family.

It localises to the cytoplasm. In terms of biological role, required for rescue of stalled ribosomes mediated by trans-translation. Binds to transfer-messenger RNA (tmRNA), required for stable association of tmRNA with ribosomes. tmRNA and SmpB together mimic tRNA shape, replacing the anticodon stem-loop with SmpB. tmRNA is encoded by the ssrA gene; the 2 termini fold to resemble tRNA(Ala) and it encodes a 'tag peptide', a short internal open reading frame. During trans-translation Ala-aminoacylated tmRNA acts like a tRNA, entering the A-site of stalled ribosomes, displacing the stalled mRNA. The ribosome then switches to translate the ORF on the tmRNA; the nascent peptide is terminated with the 'tag peptide' encoded by the tmRNA and targeted for degradation. The ribosome is freed to recommence translation, which seems to be the essential function of trans-translation. This Frankia casuarinae (strain DSM 45818 / CECT 9043 / HFP020203 / CcI3) protein is SsrA-binding protein.